The chain runs to 241 residues: Small ribosomal subunit protein bS6 (241 aa).

A compositionally biased stretch (basic residues) spans 97-108; it reads KPKIRERNRKYT. The interval 97–241 is disordered; it reads KPKIRERNRK…YNNKKPQSSN (145 aa). Residues 109 to 118 show a composition bias toward basic and acidic residues; that stretch reads LRRDRFDKPN. 2 stretches are compositionally biased toward low complexity: residues 130–151 and 161–182; these read QDQQ…QASQ and DDFQ…NQSG. A compositionally biased stretch (basic and acidic residues) spans 183-193; it reads YHRENNRHNQE. Positions 194 to 210 are enriched in low complexity; that stretch reads NMHQNNKNHQNQTSQTQ.

It belongs to the bacterial ribosomal protein bS6 family.

In terms of biological role, binds together with bS18 to 16S ribosomal RNA. The polypeptide is Small ribosomal subunit protein bS6 (Mesomycoplasma hyopneumoniae (strain J / ATCC 25934 / NCTC 10110) (Mycoplasma hyopneumoniae)).